The following is a 604-amino-acid chain: NADPH oxidase activator (604 aa).

TPR repeat units lie at residues 36-69 (SKIN…DKYL) and 71-103 (SSYY…LRGH). Disordered stretches follow at residues 180 to 298 (FKPP…KLPS) and 383 to 581 (DIIP…PYQV). Low complexity-rich tracts occupy residues 194–215 (SATT…SPPS) and 225–243 (PSSS…SSSP). The segment covering 244–260 (KLPPTPKPSFGSSPPPS) has biased composition (pro residues). Positions 261–284 (SSSSSSSSSSSSSSSISPLTNKTL) are enriched in low complexity. The PB1 domain occupies 309 to 384 (KITLKVFYKD…EINEINVKDI (76 aa)). 3 stretches are compositionally biased toward low complexity: residues 396-424 (PDKT…SSSS), 435-453 (PKTT…TTST), and 467-483 (FGST…SSSS). Positions 502 to 528 (LLKQQNQTQSINIPPKVPTSSRPKMTQ) are enriched in polar residues. Positions 529-570 (SHSPPSSSPLSSYSTSFQSVSSPSLSSSYNGSTSSYGGFSSS) are enriched in low complexity. In terms of domain architecture, WW spans 573–604 (PPTPYPYQVLYTDSNEKYYLNTETNETFWELP).

Its function is as follows. May function as an activator of NOX1, a superoxide-producing NADPH oxidase. This is NADPH oxidase activator (ncfA) from Dictyostelium discoideum (Social amoeba).